We begin with the raw amino-acid sequence, 429 residues long: Adenylosuccinate synthetase (429 aa).

GTP is bound by residues Gly-12–Lys-18 and Gly-40–Thr-42. The Proton acceptor role is filled by Asp-13. Mg(2+) is bound by residues Asp-13 and Gly-40. Residues Asp-13–Lys-16, Asn-38–His-41, Thr-129, Arg-143, Gln-223, Thr-238, and Arg-302 contribute to the IMP site. Residue His-41 is the Proton donor of the active site. Val-298–Arg-304 serves as a coordination point for substrate. GTP is bound by residues Arg-304, Lys-330 to Asp-332, and Ser-412 to Ser-414.

This sequence belongs to the adenylosuccinate synthetase family. As to quaternary structure, homodimer. Mg(2+) is required as a cofactor.

The protein resides in the cytoplasm. The enzyme catalyses IMP + L-aspartate + GTP = N(6)-(1,2-dicarboxyethyl)-AMP + GDP + phosphate + 2 H(+). Its pathway is purine metabolism; AMP biosynthesis via de novo pathway; AMP from IMP: step 1/2. In terms of biological role, plays an important role in the de novo pathway of purine nucleotide biosynthesis. Catalyzes the first committed step in the biosynthesis of AMP from IMP. The polypeptide is Adenylosuccinate synthetase (Brucella anthropi (strain ATCC 49188 / DSM 6882 / CCUG 24695 / JCM 21032 / LMG 3331 / NBRC 15819 / NCTC 12168 / Alc 37) (Ochrobactrum anthropi)).